A 161-amino-acid chain; its full sequence is Shikimate kinase (161 aa).

10-15 (GAGKTT) is an ATP binding site. Mg(2+) is bound at residue T14. Residues D28, R52, and G74 each contribute to the substrate site. Residue R114 coordinates ATP. Substrate is bound at residue R132.

It belongs to the shikimate kinase family. As to quaternary structure, monomer. It depends on Mg(2+) as a cofactor.

It is found in the cytoplasm. The catalysed reaction is shikimate + ATP = 3-phosphoshikimate + ADP + H(+). It functions in the pathway metabolic intermediate biosynthesis; chorismate biosynthesis; chorismate from D-erythrose 4-phosphate and phosphoenolpyruvate: step 5/7. Functionally, catalyzes the specific phosphorylation of the 3-hydroxyl group of shikimic acid using ATP as a cosubstrate. This chain is Shikimate kinase, found in Streptococcus gordonii (strain Challis / ATCC 35105 / BCRC 15272 / CH1 / DL1 / V288).